The primary structure comprises 268 residues: Phosphatidylglycerol--prolipoprotein diacylglyceryl transferase (268 aa).

7 helical membrane passes run 27–47 (PALR…MWLL), 66–86 (LLFY…VLFY), 104–124 (GGMS…YIAW), 130–150 (FFAV…AGRI), 181–201 (PSQL…LYWF), 208–228 (VGAV…IVET), and 242–262 (FMTM…YLIL). Position 149 (R149) interacts with a 1,2-diacyl-sn-glycero-3-phospho-(1'-sn-glycerol).

Belongs to the Lgt family.

It localises to the cell inner membrane. It carries out the reaction L-cysteinyl-[prolipoprotein] + a 1,2-diacyl-sn-glycero-3-phospho-(1'-sn-glycerol) = an S-1,2-diacyl-sn-glyceryl-L-cysteinyl-[prolipoprotein] + sn-glycerol 1-phosphate + H(+). It functions in the pathway protein modification; lipoprotein biosynthesis (diacylglyceryl transfer). Catalyzes the transfer of the diacylglyceryl group from phosphatidylglycerol to the sulfhydryl group of the N-terminal cysteine of a prolipoprotein, the first step in the formation of mature lipoproteins. This Shewanella sp. (strain MR-4) protein is Phosphatidylglycerol--prolipoprotein diacylglyceryl transferase.